Here is a 148-residue protein sequence, read N- to C-terminus: Large ribosomal subunit protein uL15 (148 aa).

Residues 1 to 51 form a disordered region; that stretch reads MNLSSLKPAEGAVKSRKRIGRGPGSGLGGTSTRGHKGAKSRSGYSKKIGFE. Over residues 21-31 the composition is skewed to gly residues; it reads RGPGSGLGGTS.

It belongs to the universal ribosomal protein uL15 family. As to quaternary structure, part of the 50S ribosomal subunit.

Functionally, binds to the 23S rRNA. In Porphyromonas gingivalis (strain ATCC 33277 / DSM 20709 / CIP 103683 / JCM 12257 / NCTC 11834 / 2561), this protein is Large ribosomal subunit protein uL15.